A 428-amino-acid polypeptide reads, in one-letter code: Adenylosuccinate synthetase (428 aa).

GTP-binding positions include 12–18 (GDEGKGK) and 40–42 (GHT). The active-site Proton acceptor is the aspartate 13. Positions 13 and 40 each coordinate Mg(2+). Residues 13-16 (DEGK), 38-41 (NAGH), threonine 130, arginine 144, glutamine 225, threonine 240, and arginine 304 contribute to the IMP site. The active-site Proton donor is histidine 41. Substrate is bound at residue 300 to 306 (VTTGRAR). Residues arginine 306, 332–334 (KID), and 414–416 (SVG) contribute to the GTP site.

This sequence belongs to the adenylosuccinate synthetase family. In terms of assembly, homodimer. The cofactor is Mg(2+).

The protein localises to the cytoplasm. It catalyses the reaction IMP + L-aspartate + GTP = N(6)-(1,2-dicarboxyethyl)-AMP + GDP + phosphate + 2 H(+). It functions in the pathway purine metabolism; AMP biosynthesis via de novo pathway; AMP from IMP: step 1/2. Functionally, plays an important role in the de novo pathway of purine nucleotide biosynthesis. Catalyzes the first committed step in the biosynthesis of AMP from IMP. This Clostridium kluyveri (strain ATCC 8527 / DSM 555 / NBRC 12016 / NCIMB 10680 / K1) protein is Adenylosuccinate synthetase.